The chain runs to 375 residues: Actin-binding Rho-activating protein (375 aa).

2 stretches are compositionally biased toward basic and acidic residues: residues methionine 1–glycine 11 and lysine 79–lysine 99. Disordered regions lie at residues methionine 1–valine 20 and asparagine 38–lysine 99. Phosphoserine is present on residues serine 150 and serine 182. Residues glutamine 173 to serine 182 are compositionally biased toward basic and acidic residues. Residues glutamine 173–proline 204 are disordered. 2 actin-binding regions span residues aspartate 193 to alanine 293 and lysine 294 to glutamate 375. 2 interaction with actin regions span residues serine 234–glycine 279 and methionine 346–glutamate 375.

In terms of assembly, binds F-actin and ABLIM1, ABLIM2 and ABLIM3. Interaction with ABLIM2 and ABLIM3 enhances activity. In terms of tissue distribution, expressed specifically in heart and skeletal muscle.

It localises to the cytoplasm. It is found in the myofibril. The protein localises to the sarcomere. Its subcellular location is the cytoskeleton. Its function is as follows. Acts as an activator of serum response factor (SRF)-dependent transcription possibly by inducing nuclear translocation of MKL1 or MKL2 and through a mechanism requiring Rho-actin signaling. In Mus musculus (Mouse), this protein is Actin-binding Rho-activating protein.